The chain runs to 422 residues: Histidine--tRNA ligase (422 aa).

This sequence belongs to the class-II aminoacyl-tRNA synthetase family. Homodimer.

Its subcellular location is the cytoplasm. The catalysed reaction is tRNA(His) + L-histidine + ATP = L-histidyl-tRNA(His) + AMP + diphosphate + H(+). The polypeptide is Histidine--tRNA ligase (Aliivibrio fischeri (strain ATCC 700601 / ES114) (Vibrio fischeri)).